Reading from the N-terminus, the 574-residue chain is 2-succinyl-5-enolpyruvyl-6-hydroxy-3-cyclohexene-1-carboxylate synthase (574 aa).

It belongs to the TPP enzyme family. MenD subfamily. In terms of assembly, homodimer. The cofactor is Mg(2+). It depends on Mn(2+) as a cofactor. Thiamine diphosphate is required as a cofactor.

It carries out the reaction isochorismate + 2-oxoglutarate + H(+) = 5-enolpyruvoyl-6-hydroxy-2-succinyl-cyclohex-3-ene-1-carboxylate + CO2. It functions in the pathway quinol/quinone metabolism; 1,4-dihydroxy-2-naphthoate biosynthesis; 1,4-dihydroxy-2-naphthoate from chorismate: step 2/7. Its pathway is quinol/quinone metabolism; menaquinone biosynthesis. Functionally, catalyzes the thiamine diphosphate-dependent decarboxylation of 2-oxoglutarate and the subsequent addition of the resulting succinic semialdehyde-thiamine pyrophosphate anion to isochorismate to yield 2-succinyl-5-enolpyruvyl-6-hydroxy-3-cyclohexene-1-carboxylate (SEPHCHC). The chain is 2-succinyl-5-enolpyruvyl-6-hydroxy-3-cyclohexene-1-carboxylate synthase from Rubrobacter xylanophilus (strain DSM 9941 / JCM 11954 / NBRC 16129 / PRD-1).